A 392-amino-acid chain; its full sequence is Nicotinate phosphoribosyltransferase (392 aa).

Phosphohistidine; by autocatalysis is present on His-216.

Belongs to the NAPRTase family. Transiently phosphorylated on a His residue during the reaction cycle. Phosphorylation strongly increases the affinity for substrates and increases the rate of nicotinate D-ribonucleotide production. Dephosphorylation regenerates the low-affinity form of the enzyme, leading to product release.

The enzyme catalyses nicotinate + 5-phospho-alpha-D-ribose 1-diphosphate + ATP + H2O = nicotinate beta-D-ribonucleotide + ADP + phosphate + diphosphate. Its pathway is cofactor biosynthesis; NAD(+) biosynthesis; nicotinate D-ribonucleotide from nicotinate: step 1/1. In terms of biological role, catalyzes the synthesis of beta-nicotinate D-ribonucleotide from nicotinate and 5-phospho-D-ribose 1-phosphate at the expense of ATP. The polypeptide is Nicotinate phosphoribosyltransferase (Cupriavidus necator (strain ATCC 17699 / DSM 428 / KCTC 22496 / NCIMB 10442 / H16 / Stanier 337) (Ralstonia eutropha)).